Reading from the N-terminus, the 203-residue chain is Sporulation delaying protein C (203 aa).

Positions 1-32 are cleaved as a signal peptide; that stretch reads MKSKLLRLLIVSMVTILVFSLVGLSKESSTSA. Residues 33-140 constitute a propeptide, removed in mature form; the sequence is KENHTFSGED…KYSSNKVTPS (108 aa). Cys-141 and Cys-147 are disulfide-bonded. A propeptide spans 183 to 203 (removed in mature form); sequence SASNNSDLEAAAAKTLKLIHQ.

As to quaternary structure, proprotein probably interacts with chaperone CsaA. Production of active SDP (able to induce SdpI and kill cells) is a multi-step process that requires signal peptide cleavage (probably by SipS or SipT) as well as SdpA and SdpB. The disulfide bond is not required for maximum toxicity.

The protein localises to the secreted. Its function is as follows. Produces a 42-residue extracellular sporulation delaying protein (SDP) that collapses the proton motive force (probably both the membrane potential and pH gradient) across the cell membrane, which leads to autolysis; may form a proton channel. Induces the lysis of other B.subtilis cells that have not entered the sporulation pathway, inducing cannibalism to provide a source of nutrients to support sporulation, and at the same time delaying commitment to the energetically expensive and irreversible onset of sporulation. Addition of SDP to liquid cultures halts growth, leads to increased cell permeability and eventually cell lysis in a significant subset of the population, although some cells survive and resume growth after a lag period. Effects of SDP are irreversible within 10 minutes. Addition of SDP to solid cultures induces killing, it is much more effective than SKF (AC O31422). Has antibiotic action against Gram-positive Firmicutes (L.acidophilus, M.megaterium, P.polymyxa, S.aureus, S.epidermidis) but not Actinobacteria M.luteus or Gram-negative P.aeruginosa or K.pneumoniae. SDP induces expression of the sdpR-sdpI operon. Its maturation is dependent on SdpA and SdpB. Also functions as a ligand, binds to SdpI triggering a signal transduction cascade that protects the cell against the toxic effects of its own SDP. The chain is Sporulation delaying protein C from Bacillus subtilis (strain 168).